A 545-amino-acid chain; its full sequence is Capsular polysaccharide phosphotransferase SacB (545 aa).

The protein belongs to the stealth family.

Its function is as follows. May be the polymerase that links individual UDP-N-acetyl-D-mannosamine monomers. In serotype A the capsule is composed of repeated units of (alpha 1-6)-linked N-acetyl-D-mannosamine-1-phosphate. In Neisseria meningitidis serogroup A, this protein is Capsular polysaccharide phosphotransferase SacB (sacB).